The primary structure comprises 559 residues: Innexin-10 (559 aa).

A run of 4 helical transmembrane segments spans residues 28-48 (YFTC…QFGG), 102-122 (QWVP…SLLW), 182-202 (FLWL…YLCT), and 283-303 (IFIL…GSFF). 2 disordered regions span residues 488-514 (EEKQ…YQNQ) and 527-559 (YRTP…STFK). Residues 503-514 (YTNQNPTPYQNQ) show a composition bias toward low complexity. Positions 528–559 (RTPSLSRGTDSRPVSTATDTDQTKKQSMSTFK) are enriched in polar residues.

The protein belongs to the pannexin family.

It is found in the cell membrane. The protein localises to the cell junction. It localises to the gap junction. Functionally, structural component of the gap junctions. The polypeptide is Innexin-10 (inx-10) (Caenorhabditis elegans).